A 117-amino-acid chain; its full sequence is Small ribosomal subunit protein eS25 (117 aa).

The segment at Met-1 to Lys-38 is disordered. Residues Lys-28–Gly-37 are compositionally biased toward basic residues.

It belongs to the eukaryotic ribosomal protein eS25 family.

This chain is Small ribosomal subunit protein eS25 (RpS25), found in Drosophila melanogaster (Fruit fly).